The primary structure comprises 929 residues: Bifunctional glutamine synthetase adenylyltransferase/adenylyl-removing enzyme (929 aa).

The interval 1–422 is adenylyl removase; that stretch reads MTTPISTSRA…TRHFEQIFAV (422 aa). The segment at 429–929 is adenylyl transferase; sequence LGTFARIRPE…FQLWEDVFGT (501 aa).

The protein belongs to the GlnE family. It depends on Mg(2+) as a cofactor.

The catalysed reaction is [glutamine synthetase]-O(4)-(5'-adenylyl)-L-tyrosine + phosphate = [glutamine synthetase]-L-tyrosine + ADP. It carries out the reaction [glutamine synthetase]-L-tyrosine + ATP = [glutamine synthetase]-O(4)-(5'-adenylyl)-L-tyrosine + diphosphate. Its function is as follows. Involved in the regulation of glutamine synthetase GlnA, a key enzyme in the process to assimilate ammonia. When cellular nitrogen levels are high, the C-terminal adenylyl transferase (AT) inactivates GlnA by covalent transfer of an adenylyl group from ATP to specific tyrosine residue of GlnA, thus reducing its activity. Conversely, when nitrogen levels are low, the N-terminal adenylyl removase (AR) activates GlnA by removing the adenylyl group by phosphorolysis, increasing its activity. The regulatory region of GlnE binds the signal transduction protein PII (GlnB) which indicates the nitrogen status of the cell. This is Bifunctional glutamine synthetase adenylyltransferase/adenylyl-removing enzyme from Nitrosomonas eutropha (strain DSM 101675 / C91 / Nm57).